A 311-amino-acid polypeptide reads, in one-letter code: Protease HtpX homolog 1 (311 aa).

The next 2 membrane-spanning stretches (helical) occupy residues 12-32 (VISL…IASL) and 35-55 (ISLF…WIIS). Histidine 137 is a Zn(2+) binding site. Residue glutamate 138 is part of the active site. Residue histidine 141 participates in Zn(2+) binding. Helical transmembrane passes span 159-179 (VLGY…FLAA) and 184-204 (LLFA…TFIL). Glutamate 216 lines the Zn(2+) pocket.

The protein belongs to the peptidase M48B family. It depends on Zn(2+) as a cofactor.

The protein localises to the cell membrane. The protein is Protease HtpX homolog 1 of Saccharolobus solfataricus (strain ATCC 35092 / DSM 1617 / JCM 11322 / P2) (Sulfolobus solfataricus).